The following is a 2291-amino-acid chain: Spectrin beta chain (2291 aa).

The tract at residues 1 to 271 (MTTDISIVRW…IITYVVTYYH (271 aa)) is actin-binding. Calponin-homology (CH) domains are found at residues 50 to 154 (SVQK…LRFQ) and 169 to 274 (KSAK…HYFS). Spectrin repeat units lie at residues 300-408 (VHDY…ALRE), 420-521 (AARF…MRLE), 525-633 (QLQQ…RLEE), 636-739 (KLWQ…RLEN), 743-843 (YFQL…QRLL), 848-948 (LYKL…MDDL), 954-1057 (VQTF…KLEE), 1060-1166 (DLHR…VLLS), 1170-1272 (DQQL…EKLK), 1276-1376 (KLHE…GAML), 1386-1484 (QQTC…KALE), 1488-1591 (EAFQ…HLLE), 1594-1697 (KVQQ…RLNE), 1701-1802 (LFML…TQML), 1807-1909 (ELHK…QKLA), 1913-2015 (DLFR…ENLQ), and 2020-2089 (VYQF…KEMK). The span at 2097 to 2140 (EAERQRIKEEQEAKAASEAAEQAKREAERRDDVDVGASHDDSER) shows a compositional bias: basic and acidic residues. Positions 2097–2152 (EAERQRIKEEQEAKAASEAAEQAKREAERRDDVDVGASHDDSERGGTPGAGEGHEG) are disordered. Positions 2147 to 2259 (GEGHEGYVTR…WVTSLKAQSD (113 aa)) constitute a PH domain. Serine 2195 carries the post-translational modification Phosphoserine. Positions 2262–2275 (AVAASRSQTLPATS) are enriched in polar residues. The segment at 2262–2291 (AVAASRSQTLPATSQKDEPKRRSFFTLKKK) is disordered.

This sequence belongs to the spectrin family. Native spectrin molecule is a tetramer composed of two antiparallel heterodimers joined head to head so that each end of the native molecule includes the C-terminus of the alpha subunit and the N-terminus of the beta subunit.

It is found in the cytoplasm. Its subcellular location is the cytoskeleton. The protein localises to the cell cortex. Spectrin is the major constituent of the cytoskeletal network underlying the erythrocyte plasma membrane. It associates with band 4.1 and actin to form the cytoskeletal superstructure of the erythrocyte plasma membrane. Interacts with calmodulin in a calcium-dependent manner. The protein is Spectrin beta chain (beta-Spec) of Drosophila melanogaster (Fruit fly).